We begin with the raw amino-acid sequence, 92 residues long: YcgL domain-containing protein HS_0805 (92 aa).

One can recognise a YcgL domain in the interval 1-85 (MLCAIYKTKR…QQENLLEQER (85 aa)).

The chain is YcgL domain-containing protein HS_0805 from Histophilus somni (strain 129Pt) (Haemophilus somnus).